The chain runs to 124 residues: Small ribosomal subunit protein uS12 (124 aa).

Positions 1-42 are disordered; sequence MPTTQQLIRKGRKTEEETSDAPALEGSPQRRGVCTRVYTTTP. Position 89 is a 3-methylthioaspartic acid (aspartate 89). Residues 105 to 124 are disordered; the sequence is AGVEERRQGRSKYGTKKPRE. Over residues 113 to 124 the composition is skewed to basic residues; sequence GRSKYGTKKPRE.

This sequence belongs to the universal ribosomal protein uS12 family. As to quaternary structure, part of the 30S ribosomal subunit. Contacts proteins S8 and S17. May interact with IF1 in the 30S initiation complex.

With S4 and S5 plays an important role in translational accuracy. In terms of biological role, interacts with and stabilizes bases of the 16S rRNA that are involved in tRNA selection in the A site and with the mRNA backbone. Located at the interface of the 30S and 50S subunits, it traverses the body of the 30S subunit contacting proteins on the other side and probably holding the rRNA structure together. The combined cluster of proteins S8, S12 and S17 appears to hold together the shoulder and platform of the 30S subunit. The sequence is that of Small ribosomal subunit protein uS12 from Salinibacter ruber (strain DSM 13855 / M31).